A 137-amino-acid chain; its full sequence is Large ribosomal subunit protein uL16 (137 aa).

Positions 1-20 (MLQPSNRKYRKDFKGRNRGV) are disordered. A compositionally biased stretch (basic residues) spans 7-17 (RKYRKDFKGRN).

The protein belongs to the universal ribosomal protein uL16 family. Part of the 50S ribosomal subunit.

In terms of biological role, binds 23S rRNA and is also seen to make contacts with the A and possibly P site tRNAs. The protein is Large ribosomal subunit protein uL16 of Coxiella burnetii (strain CbuG_Q212) (Coxiella burnetii (strain Q212)).